Reading from the N-terminus, the 198-residue chain is MLYPIPIAKLIESYSKLPGIGVKTATRLAFYTIGMSDEDVNDFAKNLLAAKRELTYCSICGNLTDDDPCHICTDSSRDKEIILVVEDSKDVSAMEKIQEYHGYYHVLHGLISPMNGVGPDDINLKSLITRLMAGEATEVIVATNATADGEATAMYISRLLKPAGIKVTRLARGLAVGSDIEYADEVTLLRAIENRTEL.

A C4-type zinc finger spans residues 57-72 (CSICGNLTDDDPCHIC). The region spanning 80–175 (EIILVVEDSK…KVTRLARGLA (96 aa)) is the Toprim domain.

The protein belongs to the RecR family.

Functionally, may play a role in DNA repair. It seems to be involved in an RecBC-independent recombinational process of DNA repair. It may act with RecF and RecO. The protein is Recombination protein RecR of Streptococcus equi subsp. equi (strain 4047).